A 333-amino-acid chain; its full sequence is Adenosine deaminase (333 aa).

Positions 12 and 14 each coordinate Zn(2+). Residues His-14, Asp-16, and Gly-170 each contribute to the substrate site. His-197 is a Zn(2+) binding site. Glu-200 functions as the Proton donor in the catalytic mechanism. Residue Asp-278 participates in Zn(2+) binding. Residue Asp-279 participates in substrate binding.

It belongs to the metallo-dependent hydrolases superfamily. Adenosine and AMP deaminases family. Adenosine deaminase subfamily. It depends on Zn(2+) as a cofactor.

The catalysed reaction is adenosine + H2O + H(+) = inosine + NH4(+). The enzyme catalyses 2'-deoxyadenosine + H2O + H(+) = 2'-deoxyinosine + NH4(+). In terms of biological role, catalyzes the hydrolytic deamination of adenosine and 2-deoxyadenosine. In Pseudoalteromonas translucida (strain TAC 125), this protein is Adenosine deaminase.